The sequence spans 117 residues: NADH-ubiquinone oxidoreductase chain 3 (117 aa).

3 consecutive transmembrane segments (helical) span residues 4–24 (FLGILIYFFIALALSLLLLGL), 61–81 (LVAILFIIFDLEVAFLFPWAL), and 86–106 (IGYFGFWSMMLFLFILTVGFI).

It belongs to the complex I subunit 3 family.

The protein resides in the mitochondrion membrane. It carries out the reaction a ubiquinone + NADH + 5 H(+)(in) = a ubiquinol + NAD(+) + 4 H(+)(out). Its function is as follows. Core subunit of the mitochondrial membrane respiratory chain NADH dehydrogenase (Complex I) that is believed to belong to the minimal assembly required for catalysis. Complex I functions in the transfer of electrons from NADH to the respiratory chain. The immediate electron acceptor for the enzyme is believed to be ubiquinone. The chain is NADH-ubiquinone oxidoreductase chain 3 (NAD3) from Prototheca wickerhamii.